Reading from the N-terminus, the 69-residue chain is UPF0291 protein CD630_10710 (69 aa).

Belongs to the UPF0291 family.

It is found in the cytoplasm. This Clostridioides difficile (strain 630) (Peptoclostridium difficile) protein is UPF0291 protein CD630_10710.